The primary structure comprises 250 residues: NAD-dependent protein deacylase (250 aa).

The region spanning 1-248 is the Deacetylase sirtuin-type domain; sequence MLGEVSKILA…PKLVEEIRRI (248 aa). 20–39 contributes to the NAD(+) binding site; that stretch reads GAGISAESGIPTFRGKDGLW. Residues Tyr64 and Arg67 each coordinate substrate. 98 to 101 contacts NAD(+); sequence QNVD. The Proton acceptor role is filled by His116. Positions 124, 127, 150, and 153 each coordinate Zn(2+). NAD(+) contacts are provided by residues 190-192, 216-218, and Ala234; these read GTS and NIE.

Belongs to the sirtuin family. Class III subfamily. Zn(2+) is required as a cofactor.

It localises to the cytoplasm. It carries out the reaction N(6)-acetyl-L-lysyl-[protein] + NAD(+) + H2O = 2''-O-acetyl-ADP-D-ribose + nicotinamide + L-lysyl-[protein]. The enzyme catalyses N(6)-succinyl-L-lysyl-[protein] + NAD(+) + H2O = 2''-O-succinyl-ADP-D-ribose + nicotinamide + L-lysyl-[protein]. In terms of biological role, NAD-dependent lysine deacetylase and desuccinylase that specifically removes acetyl and succinyl groups on target proteins. Modulates the activities of several proteins which are inactive in their acylated form. Deacetylates the N-terminal lysine residue of Alba, the major archaeal chromatin protein and that, in turn, increases Alba's DNA binding affinity, thereby repressing transcription. The protein is NAD-dependent protein deacylase of Pyrococcus furiosus (strain ATCC 43587 / DSM 3638 / JCM 8422 / Vc1).